The chain runs to 159 residues: MNRVLYPGTFDPITKGHGDLVERASRLFDQVVIAVAASPKKNPLFPLEQRVELAREVTKHLPNVEVVGFSTLLAHFAKEQNANVFLRGLRAVSDFEYEFQLANMNRQLAPDVESLFLTPSERYSFISSTLVREIAALGGDITKFVHPAVAQALTERFKR.

Thr-9 is a substrate binding site. ATP is bound by residues 9-10 and His-17; that span reads TF. Residues Lys-41, Leu-73, and Arg-87 each coordinate substrate. Residues 88–90, Glu-98, and 123–129 contribute to the ATP site; these read GLR and YSFISST.

This sequence belongs to the bacterial CoaD family. In terms of assembly, homohexamer. The cofactor is Mg(2+).

It is found in the cytoplasm. The enzyme catalyses (R)-4'-phosphopantetheine + ATP + H(+) = 3'-dephospho-CoA + diphosphate. The protein operates within cofactor biosynthesis; coenzyme A biosynthesis; CoA from (R)-pantothenate: step 4/5. Its function is as follows. Reversibly transfers an adenylyl group from ATP to 4'-phosphopantetheine, yielding dephospho-CoA (dPCoA) and pyrophosphate. In Pseudomonas syringae pv. syringae (strain B728a), this protein is Phosphopantetheine adenylyltransferase.